A 276-amino-acid polypeptide reads, in one-letter code: Elongation factor Ts (276 aa).

Positions 80–83 (TDFV) are involved in Mg(2+) ion dislocation from EF-Tu.

It belongs to the EF-Ts family.

The protein localises to the cytoplasm. In terms of biological role, associates with the EF-Tu.GDP complex and induces the exchange of GDP to GTP. It remains bound to the aminoacyl-tRNA.EF-Tu.GTP complex up to the GTP hydrolysis stage on the ribosome. The protein is Elongation factor Ts of Kocuria rhizophila (strain ATCC 9341 / DSM 348 / NBRC 103217 / DC2201).